We begin with the raw amino-acid sequence, 369 residues long: Glutamate 5-kinase (369 aa).

Lys-8 is a binding site for ATP. Residues Ser-49, Asp-136, and Asn-148 each coordinate substrate. ATP is bound by residues 168 to 169 and 212 to 218; these read TD and TGGMMTK. Residues 277 to 355 form the PUA domain; it reads TGKLYLDSGA…KEISTILGYV (79 aa).

Belongs to the glutamate 5-kinase family.

Its subcellular location is the cytoplasm. The catalysed reaction is L-glutamate + ATP = L-glutamyl 5-phosphate + ADP. Its pathway is amino-acid biosynthesis; L-proline biosynthesis; L-glutamate 5-semialdehyde from L-glutamate: step 1/2. Functionally, catalyzes the transfer of a phosphate group to glutamate to form L-glutamate 5-phosphate. The protein is Glutamate 5-kinase of Trichormus variabilis (strain ATCC 29413 / PCC 7937) (Anabaena variabilis).